The sequence spans 51 residues: UPF0181 protein HAPS_0710 (51 aa).

It belongs to the UPF0181 family.

The sequence is that of UPF0181 protein HAPS_0710 from Glaesserella parasuis serovar 5 (strain SH0165) (Haemophilus parasuis).